The following is a 730-amino-acid chain: uncharacterized protein (730 aa).

Residues 615 to 625 (FDKENSFDPSD) show a composition bias toward basic and acidic residues. Disordered stretches follow at residues 615–667 (FDKE…SSFS) and 684–730 (KSGS…FGKI). 2 stretches are compositionally biased toward low complexity: residues 653 to 667 (SSSS…SSFS) and 684 to 701 (KSGS…NSSS). Residues 713 to 723 (KKKKKKKKKKS) are compositionally biased toward basic residues.

This is an uncharacterized protein from Saccharomyces cerevisiae (strain ATCC 204508 / S288c) (Baker's yeast).